The primary structure comprises 889 residues: DNA mismatch repair protein MutS (889 aa).

Residue 641 to 648 (GPNMAGKS) coordinates ATP.

This sequence belongs to the DNA mismatch repair MutS family.

This protein is involved in the repair of mismatches in DNA. It is possible that it carries out the mismatch recognition step. This protein has a weak ATPase activity. The polypeptide is DNA mismatch repair protein MutS (Orientia tsutsugamushi (strain Boryong) (Rickettsia tsutsugamushi)).